A 305-amino-acid polypeptide reads, in one-letter code: Olfactory receptor 4B13 (305 aa).

The Extracellular segment spans residues 1–25 (MANKNNVTELIFTGLFQDPEVQKVC). N-linked (GlcNAc...) asparagine glycosylation occurs at N6. Residues 26-46 (FVLFLPVYLATLLGNSLILVA) form a helical membrane-spanning segment. Residues 47–55 (VSISKTLHS) lie on the Cytoplasmic side of the membrane. Residues 56 to 76 (PMYFFLSSLSLVEICYSSTIV) form a helical membrane-spanning segment. Residues 77 to 95 (PKFITDLLAKVKTISLKGC) lie on the Extracellular side of the membrane. A disulfide bond links C95 and C187. The chain crosses the membrane as a helical span at residues 96-116 (LTQIFFSHFFGVVEVILLVVM). Residues 117-141 (AYDRYVAICKPLHYMNIMSRQVCHM) lie on the Cytoplasmic side of the membrane. A helical transmembrane segment spans residues 142–162 (LVAGSWLGGFIHSIIQIIITI). The Extracellular portion of the chain corresponds to 163-202 (PLPFCGPNVIDHYFCDLQQLFKLACTDTFMEGFIVMANSG). Residues 203-223 (LISIVSLFILVSSYAVILISL) form a helical membrane-spanning segment. The Cytoplasmic segment spans residues 224-236 (RKRSAEGRRKALS). Residues 237-257 (TCASHITVVILFFVPGAFIYM) form a helical membrane-spanning segment. Residues 258 to 266 (RPSSTFTED) are Extracellular-facing. The chain crosses the membrane as a helical span at residues 267-287 (KLVSVFYTVITPMLNPIVYTL). Residues 288–305 (RNTEMKNAIRMSWKQKDS) lie on the Cytoplasmic side of the membrane.

The protein belongs to the G-protein coupled receptor 1 family.

The protein localises to the cell membrane. In terms of biological role, odorant receptor. The sequence is that of Olfactory receptor 4B13 from Mus musculus (Mouse).